The sequence spans 456 residues: Equilibrative nucleoside transporter 2 (456 aa).

A helical transmembrane segment spans residues 13–33 (LVGISFFILGLGTLLPWNFFI). 2 N-linked (GlcNAc...) asparagine glycosylation sites follow: Asn-48 and Asn-57. Helical transmembrane passes span 70-90 (WVTL…SFLY), 99-119 (ILGS…LVKV), 124-144 (GPFF…SAVL), 162-182 (LFLS…LLSM), and 193-213 (LGYF…YLSL). An N-linked (GlcNAc...) asparagine glycan is attached at Asn-225. A Phosphoserine modification is found at Ser-252. A run of 5 helical transmembrane segments spans residues 291 to 311 (WLTA…FPAI), 324 to 344 (WSQF…DWLG), 360 to 380 (LLPL…LCHV), 386 to 406 (LPIL…FAVS), and 432 to 452 (ALMT…SFLF).

Belongs to the SLC29A/ENT transporter (TC 2.A.57) family. In terms of processing, glycosylated. As to expression, highly expressed in skeletal muscle. Expressed in liver, lung, placenta, brain, heart, kidney and ovarian tissues. Expressed in testis at the blood-brain-barrier.

The protein resides in the apical cell membrane. It is found in the basolateral cell membrane. The enzyme catalyses inosine(in) = inosine(out). It carries out the reaction adenosine(in) = adenosine(out). The catalysed reaction is uridine(out) = uridine(in). It catalyses the reaction thymidine(in) = thymidine(out). The enzyme catalyses hypoxanthine(out) = hypoxanthine(in). It carries out the reaction adenine(out) = adenine(in). The catalysed reaction is cytidine(in) = cytidine(out). It catalyses the reaction thymine(out) = thymine(in). The enzyme catalyses uracil(in) = uracil(out). It carries out the reaction guanine(out) = guanine(in). The catalysed reaction is guanosine(in) = guanosine(out). Functionally, bidirectional uniporter involved in the facilitative transport of nucleosides and nucleobases, and contributes to maintaining their cellular homeostasis. Functions as a Na(+)-independent, passive transporter. Involved in the transport of nucleosides such as inosine, adenosine, uridine, thymidine, cytidine and guanosine. Also able to transport purine nucleobases (hypoxanthine, adenine, guanine) and pyrimidine nucleobases (thymine, uracil). Involved in nucleoside transport at basolateral membrane of kidney cells, allowing liver absorption of nucleoside metabolites. Mediates apical nucleoside uptake into Sertoli cells, thereby regulating the transport of nucleosides in testis across the blood-testis-barrier. Mediates both the influx and efflux of hypoxanthine in skeletal muscle microvascular endothelial cells to control the amount of intracellular hypoxanthine available for xanthine oxidase-mediated ROS production. Its function is as follows. Non functional nucleoside transporter protein for adenosine or thymidine transport. Does not express on cell membrane. This is Equilibrative nucleoside transporter 2 from Homo sapiens (Human).